Here is a 245-residue protein sequence, read N- to C-terminus: Serine/arginine-rich splicing factor 1B (245 aa).

The RRM 1 domain maps to 15-90 (CRIYVGNLPP…YRLRVEFPRS (76 aa)). 2 disordered regions span residues 89–116 (RSGR…PPSR) and 192–245 (KVDG…RSRT). Residues 91–106 (GRGGGRGGGGGGGVGA) show a composition bias toward gly residues. Residues 120 to 194 (YRVIVSGLPP…ETAYIRVKVD (75 aa)) form the RRM 2 domain. Basic residues predominate over residues 204-245 (SRSRSRSRSRSRSNSRSRSYSPRRSRGSPRYSPRHSRSRSRT).

Belongs to the splicing factor SR family.

Its subcellular location is the cytoplasm. The protein localises to the nucleus speckle. Its function is as follows. May play a role in preventing exon skipping, ensuring the accuracy of splicing and regulating alternative splicing. This Danio rerio (Zebrafish) protein is Serine/arginine-rich splicing factor 1B (srsf1b).